The sequence spans 454 residues: Histidine--tRNA ligase (454 aa).

The segment at 434–454 is disordered; the sequence is ADAGAWNPPTEDLHPGVIGTW.

It belongs to the class-II aminoacyl-tRNA synthetase family. Homodimer.

It localises to the cytoplasm. The catalysed reaction is tRNA(His) + L-histidine + ATP = L-histidyl-tRNA(His) + AMP + diphosphate + H(+). In Cutibacterium acnes (strain DSM 16379 / KPA171202) (Propionibacterium acnes), this protein is Histidine--tRNA ligase (hisS).